The chain runs to 166 residues: NADPH-dependent 7-cyano-7-deazaguanine reductase (166 aa).

Residue C57 is the Thioimide intermediate of the active site. The active-site Proton donor is D64. Substrate contacts are provided by residues 79–81 (VES) and 98–99 (HE).

This sequence belongs to the GTP cyclohydrolase I family. QueF type 1 subfamily.

It is found in the cytoplasm. It carries out the reaction 7-aminomethyl-7-carbaguanine + 2 NADP(+) = 7-cyano-7-deazaguanine + 2 NADPH + 3 H(+). It functions in the pathway tRNA modification; tRNA-queuosine biosynthesis. Catalyzes the NADPH-dependent reduction of 7-cyano-7-deazaguanine (preQ0) to 7-aminomethyl-7-deazaguanine (preQ1). The protein is NADPH-dependent 7-cyano-7-deazaguanine reductase of Staphylococcus aureus (strain JH1).